Here is a 440-residue protein sequence, read N- to C-terminus: Histidinol dehydrogenase homolog 2 (440 aa).

H265 is a Zn(2+) binding site. Residues E333 and H334 each act as proton acceptor in the active site. H426 lines the Zn(2+) pocket.

Belongs to the histidinol dehydrogenase family. The cofactor is Zn(2+).

This chain is Histidinol dehydrogenase homolog 2, found in Mesorhizobium japonicum (strain LMG 29417 / CECT 9101 / MAFF 303099) (Mesorhizobium loti (strain MAFF 303099)).